A 472-amino-acid chain; its full sequence is Levansucrase (472 aa).

The first 29 residues, 1 to 29, serve as a signal peptide directing secretion; it reads MNIKKIVKQATVLTFTTALLAGGATQAFA. Residues Trp-85, Asp-86, and Ser-164 each contribute to the sucrose site. Asp-86 acts as the Nucleophile in catalysis. Asp-241 contributes to the Ca(2+) binding site. Arg-246 and Asp-247 together coordinate sucrose. 4 residues coordinate Ca(2+): Gln-272, Leu-308, Asn-310, and Asp-339. Glu-340 is a sucrose binding site. Glu-342 serves as the catalytic Proton donor/acceptor. Sucrose is bound at residue Arg-360.

It belongs to the glycosyl hydrolase 68 family.

The protein localises to the secreted. It carries out the reaction [6)-beta-D-fructofuranosyl-(2-&gt;](n) alpha-D-glucopyranoside + sucrose = [6)-beta-D-fructofuranosyl-(2-&gt;](n+1) alpha-D-glucopyranoside + D-glucose. Its activity is regulated as follows. Ca(2+) may play an important structural role and promote stability of levansucrase. Functionally, catalyzes the synthesis of levan, a fructose polymer, by transferring the fructosyl moiety from sucrose to a growing acceptor molecule. Also displays sucrose hydrolase activity. The sequence is that of Levansucrase from Bacillus amyloliquefaciens (Bacillus velezensis).